The following is an 878-amino-acid chain: Probable LRR receptor-like serine/threonine-protein kinase MEE39 (878 aa).

The signal sequence occupies residues 1–25 (MKNLCWVFLSLFWFGVFLIIRFAEG). Over 26 to 514 (QNQEGFISLD…IDKPKKKVAV (489 aa)) the chain is Extracellular. 8 N-linked (GlcNAc...) asparagine glycosylation sites follow: Asn-183, Asn-203, Asn-235, Asn-290, Asn-404, Asn-418, Asn-445, and Asn-466. 3 LRR repeats span residues 413 to 436 (RIIS…QNLA), 437 to 458 (HLES…FLAT), and 461 to 483 (SLLV…LRDR). Residues 515 to 535 (KVVAPVASIAAIVVVILLFVF) traverse the membrane as a helical segment. Residues 536-878 (KKKMSSRNKP…FDTDVKPKAR (343 aa)) lie on the Cytoplasmic side of the membrane. Phosphothreonine is present on Thr-557. A Protein kinase domain is found at 566 to 840 (KNLQRPLGEG…QVIINLKECL (275 aa)). ATP-binding positions include 572–580 (LGEGGFGVV) and Lys-594. A Phosphotyrosine modification is found at Tyr-639. The active-site Proton acceptor is the Asp-691. Ser-726 carries the post-translational modification Phosphoserine. Residues Thr-727 and Thr-732 each carry the phosphothreonine modification. Position 740 is a phosphotyrosine (Tyr-740). The span at 849 to 869 (RNNQNMDSGHSSDQLNVTVTF) shows a compositional bias: polar residues. Residues 849 to 878 (RNNQNMDSGHSSDQLNVTVTFDTDVKPKAR) are disordered.

The protein belongs to the protein kinase superfamily. Ser/Thr protein kinase family.

The protein resides in the membrane. It catalyses the reaction L-seryl-[protein] + ATP = O-phospho-L-seryl-[protein] + ADP + H(+). The catalysed reaction is L-threonyl-[protein] + ATP = O-phospho-L-threonyl-[protein] + ADP + H(+). Its function is as follows. Receptor-like serine/threonine-kinase required during the endosperm development in seeds. This is Probable LRR receptor-like serine/threonine-protein kinase MEE39 (MEE39) from Arabidopsis thaliana (Mouse-ear cress).